Reading from the N-terminus, the 330-residue chain is Fructose-1,6-bisphosphatase class 1 (330 aa).

4 residues coordinate Mg(2+): glutamate 84, aspartate 103, leucine 105, and aspartate 106. Residues 106–109 (DGSS), asparagine 196, and lysine 262 each bind substrate. Mg(2+) is bound at residue glutamate 268.

This sequence belongs to the FBPase class 1 family. As to quaternary structure, homotetramer. It depends on Mg(2+) as a cofactor.

The protein localises to the cytoplasm. It catalyses the reaction beta-D-fructose 1,6-bisphosphate + H2O = beta-D-fructose 6-phosphate + phosphate. It participates in carbohydrate biosynthesis; gluconeogenesis. This Shewanella sp. (strain W3-18-1) protein is Fructose-1,6-bisphosphatase class 1.